A 369-amino-acid chain; its full sequence is 4-hydroxy-3-methylbut-2-en-1-yl diphosphate synthase (flavodoxin) (369 aa).

[4Fe-4S] cluster is bound by residues Cys-270, Cys-273, Cys-305, and Glu-312.

It belongs to the IspG family. The cofactor is [4Fe-4S] cluster.

The enzyme catalyses (2E)-4-hydroxy-3-methylbut-2-enyl diphosphate + oxidized [flavodoxin] + H2O + 2 H(+) = 2-C-methyl-D-erythritol 2,4-cyclic diphosphate + reduced [flavodoxin]. It participates in isoprenoid biosynthesis; isopentenyl diphosphate biosynthesis via DXP pathway; isopentenyl diphosphate from 1-deoxy-D-xylulose 5-phosphate: step 5/6. Converts 2C-methyl-D-erythritol 2,4-cyclodiphosphate (ME-2,4cPP) into 1-hydroxy-2-methyl-2-(E)-butenyl 4-diphosphate. This chain is 4-hydroxy-3-methylbut-2-en-1-yl diphosphate synthase (flavodoxin), found in Psychromonas ingrahamii (strain DSM 17664 / CCUG 51855 / 37).